The sequence spans 401 residues: Imidazolonepropionase (401 aa).

Fe(3+)-binding residues include His-66 and His-68. His-66 and His-68 together coordinate Zn(2+). 4-imidazolone-5-propanoate-binding residues include Arg-75, Tyr-138, and His-171. N-formimidoyl-L-glutamate is bound at residue Tyr-138. His-236 is a Fe(3+) binding site. Residue His-236 participates in Zn(2+) binding. Position 239 (Gln-239) interacts with 4-imidazolone-5-propanoate. Position 311 (Asp-311) interacts with Fe(3+). Residue Asp-311 coordinates Zn(2+). N-formimidoyl-L-glutamate-binding residues include Asn-313 and Gly-315. Thr-316 serves as a coordination point for 4-imidazolone-5-propanoate.

Belongs to the metallo-dependent hydrolases superfamily. HutI family. Zn(2+) is required as a cofactor. The cofactor is Fe(3+).

The protein localises to the cytoplasm. The catalysed reaction is 4-imidazolone-5-propanoate + H2O = N-formimidoyl-L-glutamate. The protein operates within amino-acid degradation; L-histidine degradation into L-glutamate; N-formimidoyl-L-glutamate from L-histidine: step 3/3. Functionally, catalyzes the hydrolytic cleavage of the carbon-nitrogen bond in imidazolone-5-propanoate to yield N-formimidoyl-L-glutamate. It is the third step in the universal histidine degradation pathway. This Pseudomonas putida (Arthrobacter siderocapsulatus) protein is Imidazolonepropionase.